Reading from the N-terminus, the 442-residue chain is D-inositol 3-phosphate glycosyltransferase (442 aa).

His15 serves as a coordination point for 1D-myo-inositol 3-phosphate. UDP-N-acetyl-alpha-D-glucosamine is bound by residues Gln21–Pro22 and Gly29. Residues Asp26–Asn31, Lys84, Tyr117, Thr141, and Arg161 contribute to the 1D-myo-inositol 3-phosphate site. 3 residues coordinate UDP-N-acetyl-alpha-D-glucosamine: Arg235, Lys240, and Gln299. Mg(2+) is bound by residues Tyr308, Arg309, and Ser311. Residues Glu321 and Glu329 each coordinate UDP-N-acetyl-alpha-D-glucosamine. Residue Thr335 participates in Mg(2+) binding.

Belongs to the glycosyltransferase group 1 family. MshA subfamily. As to quaternary structure, homodimer.

It catalyses the reaction 1D-myo-inositol 3-phosphate + UDP-N-acetyl-alpha-D-glucosamine = 1D-myo-inositol 2-acetamido-2-deoxy-alpha-D-glucopyranoside 3-phosphate + UDP + H(+). Catalyzes the transfer of a N-acetyl-glucosamine moiety to 1D-myo-inositol 3-phosphate to produce 1D-myo-inositol 2-acetamido-2-deoxy-glucopyranoside 3-phosphate in the mycothiol biosynthesis pathway. This Rhodococcus erythropolis (strain PR4 / NBRC 100887) protein is D-inositol 3-phosphate glycosyltransferase.